The following is a 171-amino-acid chain: Protein FAM209A (171 aa).

The N-terminal stretch at 1–19 is a signal peptide; that stretch reads MWTLKSSLVLLLCLTCSYA. Over 20-52 the chain is Extracellular; that stretch reads FMFSSLRQKTSEPQGKVQYGEHFRIRQNLPEHT. A helical membrane pass occupies residues 53 to 73; that stretch reads QGWLGSKWLWLLFVVVPFVIL. Residues 74-171 lie on the Cytoplasmic side of the membrane; it reads QCQRDSEKNK…CEIWGEESSS (98 aa). The tract at residues 81–107 is disordered; the sequence is KNKEQSPPGLRGGQLHSPLKKKRNASP. The stretch at 114 to 139 forms a coiled coil; the sequence is NTLMELEVELMKFVSKVRNLKRAMAT.

The protein belongs to the FAM209 family. Interacts with DPY19L2. Interacts with CYLC1; the interaction may be relevant for proper acrosome attachment to the nuclear envelope.

The protein localises to the nucleus inner membrane. Functionally, may play a role in sperm acrosome biogenesis. This chain is Protein FAM209A, found in Homo sapiens (Human).